The sequence spans 301 residues: Nucleosome assembly protein 1;3 (301 aa).

The stretch at Val15–Glu69 forms a coiled coil. The Nuclear export signal signature appears at Leu36–Gln51. A disordered region spans residues Asp278–Ala301.

It belongs to the nucleosome assembly protein (NAP) family.

It localises to the nucleus. The protein localises to the cytoplasm. Its function is as follows. May modulate chromatin structure by regulation of nucleosome assembly/disassembly. The sequence is that of Nucleosome assembly protein 1;3 (NAP1;3) from Oryza sativa subsp. japonica (Rice).